The chain runs to 153 residues: Bifunctional protein GAL10 (153 aa).

The tract at residues 1–153 (MSDDIFLVTG…IPIPEHCPME (153 aa)) is galactowaldenase.

It in the N-terminal section; belongs to the NAD(P)-dependent epimerase/dehydratase family. In the C-terminal section; belongs to the aldose epimerase family. The cofactor is NAD(+).

The catalysed reaction is UDP-alpha-D-glucose = UDP-alpha-D-galactose. It carries out the reaction alpha-D-glucose = beta-D-glucose. It functions in the pathway carbohydrate metabolism; galactose metabolism. The protein operates within carbohydrate metabolism; hexose metabolism. Its function is as follows. Mutarotase converts alpha-aldose to the beta-anomer. It is active on D-glucose, L-arabinose, D-xylose, D-galactose, maltose and lactose. This Candida maltosa (Yeast) protein is Bifunctional protein GAL10 (GAL10).